The sequence spans 313 residues: Olfactory receptor 5D18 (313 aa).

The Extracellular portion of the chain corresponds to 1 to 26; it reads MLLTDRNTSGTTFTLLGFSDYPELQV. The N-linked (GlcNAc...) asparagine glycan is linked to N7. Residues 27–47 form a helical membrane-spanning segment; sequence PLFLVFLAIYNVTVLGNIGLI. The Cytoplasmic portion of the chain corresponds to 48–55; it reads VIIKINPK. Residues 56–76 traverse the membrane as a helical segment; sequence LHTPMYFFLSQLSFVDFCYSS. At 77–100 the chain is on the extracellular side; the sequence is IIAPKMLVNLVVKDRTISFLGCVV. Cysteines 98 and 190 form a disulfide. Residues 101–121 form a helical membrane-spanning segment; that stretch reads QFFFFCTFVVTESFLLAVMAY. Topologically, residues 122–140 are cytoplasmic; the sequence is DRFVAICNPLLYTVNMSQK. The chain crosses the membrane as a helical span at residues 141–161; it reads LCVLLVVGSYAWGVSCSLELT. The Extracellular segment spans residues 162 to 197; that stretch reads CSALKLCFHGFNTINHFFCEFSSLLSLSCSDTYINQ. The chain crosses the membrane as a helical span at residues 198–218; sequence WLLFFLATFNEISTLLIVLTS. At 219–238 the chain is on the cytoplasmic side; the sequence is YAFIVVTILKMRSVSGRRKA. A helical transmembrane segment spans residues 239–259; it reads FSTCASHLTAITIFHGTILFL. The Extracellular portion of the chain corresponds to 260-272; sequence YCVPNSKNSRHTV. A helical transmembrane segment spans residues 273–293; it reads KVASVFYTVVIPMLNPLIYSL. The Cytoplasmic portion of the chain corresponds to 294-313; that stretch reads RNKDVKDTVTEILDTKVFSY.

Belongs to the G-protein coupled receptor 1 family.

The protein localises to the cell membrane. Odorant receptor. The polypeptide is Olfactory receptor 5D18 (OR5D18) (Homo sapiens (Human)).